The following is a 688-amino-acid chain: G protein-coupled receptor kinase 3 (688 aa).

The N-terminal stretch occupies residues 1–190; sequence MADLEAVLAD…ELNIHLSMND (190 aa). The 122-residue stretch at 54-175 folds into the RGS domain; the sequence is TFDKIFNQKI…MESDKFTRFC (122 aa). The 263-residue stretch at 191–453 folds into the Protein kinase domain; it reads FSVHRIIGRG…ARELKEHIFF (263 aa). ATP is bound by residues 197 to 205 and K220; that span reads IGRGGFGEV. Residue D317 is the Proton acceptor of the active site. In terms of domain architecture, AGC-kinase C-terminal spans 454–521; it reads KGIDWQHVYL…VISERWQQEV (68 aa). The 95-residue stretch at 558–652 folds into the PH domain; it reads DCIMHGYMLK…WLKELTCTFN (95 aa).

Belongs to the protein kinase superfamily. AGC Ser/Thr protein kinase family. GPRK subfamily. In terms of assembly, interacts with GIT1. Ubiquitinated.

It localises to the postsynapse. It is found in the presynapse. It catalyses the reaction [beta-adrenergic receptor] + ATP = [beta-adrenergic receptor]-phosphate + ADP + H(+). Specifically phosphorylates the agonist-occupied form of the beta-adrenergic and closely related receptors. The protein is G protein-coupled receptor kinase 3 of Mus musculus (Mouse).